We begin with the raw amino-acid sequence, 487 residues long: Inosine-5'-monophosphate dehydrogenase (487 aa).

2 CBS domains span residues valine 93–valine 152 and methionine 153–glutamate 214. Residues aspartate 248, aspartate 248–serine 250, and glycine 298–glycine 300 each bind NAD(+). Positions 300 and 302 each coordinate K(+). Serine 303 contacts IMP. Cysteine 305 contributes to the K(+) binding site. Cysteine 305 functions as the Thioimidate intermediate in the catalytic mechanism. IMP is bound by residues aspartate 338–glycine 340, glycine 361–serine 362, and tyrosine 385–glycine 389. Arginine 401 serves as the catalytic Proton acceptor. Residue glutamate 415 participates in IMP binding. Residues glutamate 469, serine 470, and histidine 471 each contribute to the K(+) site.

It belongs to the IMPDH/GMPR family. Homotetramer. K(+) serves as cofactor.

The enzyme catalyses IMP + NAD(+) + H2O = XMP + NADH + H(+). It functions in the pathway purine metabolism; XMP biosynthesis via de novo pathway; XMP from IMP: step 1/1. Its activity is regulated as follows. Mycophenolic acid (MPA) is a non-competitive inhibitor that prevents formation of the closed enzyme conformation by binding to the same site as the amobile flap. In contrast, mizoribine monophosphate (MZP) is a competitive inhibitor that induces the closed conformation. MPA is a potent inhibitor of mammalian IMPDHs but a poor inhibitor of the bacterial enzymes. MZP is a more potent inhibitor of bacterial IMPDH. In terms of biological role, catalyzes the conversion of inosine 5'-phosphate (IMP) to xanthosine 5'-phosphate (XMP), the first committed and rate-limiting step in the de novo synthesis of guanine nucleotides, and therefore plays an important role in the regulation of cell growth. The chain is Inosine-5'-monophosphate dehydrogenase from Yersinia pestis.